The following is a 587-amino-acid chain: Tyrosine-protein kinase transforming protein Src (587 aa).

The tract at residues 1 to 58 is disordered; the sequence is MGSSKSKPKDPSQRRRSLEPPDSTHHGGFPASQTPNKTAAPDTHRTPSRSFGTVATEP. Gly2 is lipidated: N-myristoyl glycine; by host. Residues 7–25 are compositionally biased toward basic and acidic residues; the sequence is KPKDPSQRRRSLEPPDSTH. The 62-residue stretch at 81 to 142 folds into the SH3 domain; sequence GGVTTFVALY…PSNYVAPSDS (62 aa). The 98-residue stretch at 148 to 245 folds into the SH2 domain; sequence WYFGKITRRE…GLCHRLTNVC (98 aa). A Protein kinase domain is found at 267–520; it reads LRLEVKLGQG…YLQAFLEDYF (254 aa). Residues 273–281 and Lys295 each bind ATP; that span reads LGQGCFGEV. Asp386 (proton acceptor) is an active-site residue. Tyr416 bears the Phosphotyrosine; by autocatalysis mark.

Belongs to the protein kinase superfamily. Tyr protein kinase family. SRC subfamily. In terms of processing, the phosphorylated form is termed pp60v-src.

The enzyme catalyses L-tyrosyl-[protein] + ATP = O-phospho-L-tyrosyl-[protein] + ADP + H(+). Functionally, this phosphoprotein, required for both the initiation and the maintenance of neoplastic transformation, is a protein kinase that catalyzes the phosphorylation of tyrosine residues in vitro. The protein is Tyrosine-protein kinase transforming protein Src (V-SRC) of Galliformes.